We begin with the raw amino-acid sequence, 300 residues long: Inosose dehydratase (300 aa).

This sequence belongs to the IolE/MocC family. Requires glutathione as cofactor. The cofactor is Co(2+). It depends on Mn(2+) as a cofactor.

It carries out the reaction scyllo-inosose = 3D-3,5/4-trihydroxycyclohexane-1,2-dione + H2O. It participates in polyol metabolism; myo-inositol degradation into acetyl-CoA; acetyl-CoA from myo-inositol: step 2/7. Its function is as follows. Catalyzes the dehydration of inosose (2-keto-myo-inositol, 2KMI or 2,4,6/3,5-pentahydroxycyclohexanone) to 3D-(3,5/4)-trihydroxycyclohexane-1,2-dione (D-2,3-diketo-4-deoxy-epi-inositol). The chain is Inosose dehydratase from Lactiplantibacillus plantarum (strain ATCC BAA-793 / NCIMB 8826 / WCFS1) (Lactobacillus plantarum).